A 99-amino-acid polypeptide reads, in one-letter code: MARSHGERLKTRHKFNKDLRARGLSPVSKAVQEFEVGQKVHIDIDPSVHKGMPYRRFQGLTGEILGQAGRAWFVGISDGGKKKTVIARSQHLKPQKNSA.

It belongs to the eukaryotic ribosomal protein eL21 family.

The chain is Large ribosomal subunit protein eL21 from Methanocella arvoryzae (strain DSM 22066 / NBRC 105507 / MRE50).